Here is a 955-residue protein sequence, read N- to C-terminus: Probable autotransporter YcgV (955 aa).

Residues 616 to 659 (ASGTVPEPTPNPEPTPAPAQPPIVNPDPTPEPAPTPKPTTTADA) are disordered. The span at 622–652 (EPTPNPEPTPAPAQPPIVNPDPTPEPAPTPK) shows a compositional bias: pro residues. Residues 687 to 955 (NQSKDGNIWL…QVNGGYRFSF (269 aa)) enclose the Autotransporter domain.

In terms of biological role, upon overexpression shows increased adherence to polyvinyl chloride (PVC) plates, increased mature biofilm formation. The protein is Probable autotransporter YcgV (ycgV) of Escherichia coli (strain K12).